Consider the following 59-residue polypeptide: Small EDRK-rich factor 2 (59 aa).

Composition is skewed to basic and acidic residues over residues 1–30 (MTRGNQRELARQKNMKKQSDSVKGKRRDDG) and 50–59 (KANEKKEEPK). Positions 1–59 (MTRGNQRELARQKNMKKQSDSVKGKRRDDGLSAAARKQRDSEIMQQKQKKANEKKEEPK) are disordered.

The protein belongs to the SERF family.

In terms of biological role, positive regulator of amyloid protein aggregation and proteotoxicity. Induces conformational changes in amyloid proteins, such as HTT, driving them into compact formations preceding the formation of aggregates. This chain is Small EDRK-rich factor 2 (SERF2), found in Plecturocebus moloch (Dusky titi monkey).